A 219-amino-acid polypeptide reads, in one-letter code: MPFIENQTTTAEPIVPVDVKGKDAFHKLVDDLSAVLGPSSGLDSDDVDPMDIQKLMEGYVSNHEEWQRYALADESRAYTRNLVDEGNGKSNLLVLVWNPGKSSPIHDHANAHCVMKILHGSLKEHRYDWPEQDKINNGEACPLTVTKETILRENEVAYMSDKLGLHKISNPDPNDFAISLHLYTPPNAAHFGCSLFDEKTGKSHHIKQCTFFSNRGLKL.

Histidine 106, histidine 108, and histidine 166 together coordinate Fe cation. The segment at residues cysteine 113 to tyrosine 183 is a cross-link (3'-(S-cysteinyl)-tyrosine (Cys-Tyr)).

This sequence belongs to the cysteine dioxygenase family. The cofactor is Fe cation. In terms of processing, the thioether cross-link between Cys-113 and Tyr-183 plays a structural role through stabilizing the Fe(2+) ion, and prevents the production of highly damaging free hydroxyl radicals by holding the oxygen radical via hydroxyl hydrogen.

The catalysed reaction is L-cysteine + O2 = 3-sulfino-L-alanine + H(+). In terms of biological role, cysteine dioxygenase involved in sulfite formation from cysteine. Required for keratin degradation and plays an important role in filamentous growth and virulence. In Arthroderma benhamiae (Trichophyton mentagrophytes), this protein is Cysteine dioxygenase.